Reading from the N-terminus, the 134-residue chain is L-ectoine synthase (134 aa).

It belongs to the ectoine synthase family.

The enzyme catalyses (2S)-4-acetamido-2-aminobutanoate = L-ectoine + H2O. It participates in amine and polyamine biosynthesis; ectoine biosynthesis; L-ectoine from L-aspartate 4-semialdehyde: step 3/3. In terms of biological role, catalyzes the circularization of gamma-N-acetyl-alpha,gamma-diaminobutyric acid (ADABA) to ectoine (1,4,5,6-tetrahydro-2-methyl-4-pyrimidine carboxylic acid), which is an excellent osmoprotectant. This is L-ectoine synthase from Shouchella clausii (strain KSM-K16) (Alkalihalobacillus clausii).